The following is a 740-amino-acid chain: Anaphase-promoting complex subunit 5 (740 aa).

Serine 180 carries the phosphoserine modification. TPR repeat units follow at residues 194–234, 235–285, 286–322, 323–363, 364–403, 404–451, 452–485, 486–525, 526–565, 566–605, 606–645, 646–681, and 682–721; these read QKQA…FNPD, FAEA…GRSL, RYAALNLAALHCRFGHYQQAELALQEAIRIAQESNDH, VCLQ…YLAS, LGIQSLVQQRAFAGKTANKLMDALKDSDLLHWKHSLSELI, DISI…TESF, AVALCHLAELHAEQGCFAAAGEVLKHLKDRFPPN, SQHAQLWMLCDQKIQFDRAMNDGKFHLADSLVTGITALNG, IEGVYRKAVVLQAQNQMTEAHKLLQKLLTYCQKLKNTEMV, ISVLLSVAELYWRSSSPTIAMPVLLEALALSKEYRLQYLA, SETVLNLAYAQLILGIPEQALTLLHMAIEPILADGAVLDK, GRAMFLVSKCQVASAASYDPVKKAEALEAAIQNLSE, and AKNYFAQVDCRERIRDVAYFQARLYHALGKTQERNHCAMI. Threonine 217 carries the phosphothreonine modification.

Belongs to the APC5 family. As to quaternary structure, the mammalian APC/C is composed at least of 14 distinct subunits ANAPC1, ANAPC2, CDC27/APC3, ANAPC4, ANAPC5, CDC16/APC6, ANAPC7, CDC23/APC8, ANAPC10, ANAPC11, CDC26/APC12, ANAPC13, ANAPC15 and ANAPC16 that assemble into a complex of at least 19 chains with a combined molecular mass of around 1.2 MDa; APC/C interacts with FZR1 and FBXO5.

The protein localises to the nucleus. Its subcellular location is the cytoplasm. It localises to the cytoskeleton. It is found in the spindle. The protein operates within protein modification; protein ubiquitination. Its function is as follows. Component of the anaphase promoting complex/cyclosome (APC/C), a cell cycle-regulated E3 ubiquitin ligase that controls progression through mitosis and the G1 phase of the cell cycle. The APC/C complex acts by mediating ubiquitination and subsequent degradation of target proteins: it mainly mediates the formation of 'Lys-11'-linked polyubiquitin chains and, to a lower extent, the formation of 'Lys-48'- and 'Lys-63'-linked polyubiquitin chains. The APC/C complex catalyzes assembly of branched 'Lys-11'-/'Lys-48'-linked branched ubiquitin chains on target proteins. This Mus musculus (Mouse) protein is Anaphase-promoting complex subunit 5 (Anapc5).